Here is a 192-residue protein sequence, read N- to C-terminus: Protein hunchback (192 aa).

Disordered stretches follow at residues 16–54 (SHHH…SNTN) and 152–192 (LTPP…KYMA). Residues 17–28 (HHHHHHHAHHSH) are compositionally biased toward basic residues. The segment covering 32 to 41 (SNSNASSPHQ) has biased composition (low complexity). Residues 173–192 (EPEKEHDLMSNSSEDMKYMA) are compositionally biased toward basic and acidic residues.

Belongs to the hunchback C2H2-type zinc-finger protein family.

It localises to the nucleus. Functionally, gap class segmentation protein that controls development of head structures. The polypeptide is Protein hunchback (hb) (Drosophila tanythrix (Fruit fly)).